The sequence spans 423 residues: L-cysteine:1D-myo-inositol 2-amino-2-deoxy-alpha-D-glucopyranoside ligase (423 aa).

Cys43 contributes to the Zn(2+) binding site. L-cysteinyl-5'-AMP-binding positions include 43–46 (CGIT), Thr58, and 81–83 (NVT). The short motif at 45–55 (ITPYDATHMGH) is the 'HIGH' region element. A 'ERGGDP' region motif is present at residues 199 to 204 (ERGGDP). L-cysteinyl-5'-AMP is bound at residue Trp240. Cys244 is a binding site for Zn(2+). 262 to 264 (GSD) lines the L-cysteinyl-5'-AMP pocket. His269 is a Zn(2+) binding site. L-cysteinyl-5'-AMP is bound at residue Val295. The short motif at 301-305 (KMSKS) is the 'KMSKS' region element.

It belongs to the class-I aminoacyl-tRNA synthetase family. MshC subfamily. In terms of assembly, monomer. Zn(2+) serves as cofactor.

It catalyses the reaction 1D-myo-inositol 2-amino-2-deoxy-alpha-D-glucopyranoside + L-cysteine + ATP = 1D-myo-inositol 2-(L-cysteinylamino)-2-deoxy-alpha-D-glucopyranoside + AMP + diphosphate + H(+). In terms of biological role, catalyzes the ATP-dependent condensation of GlcN-Ins and L-cysteine to form L-Cys-GlcN-Ins. This is L-cysteine:1D-myo-inositol 2-amino-2-deoxy-alpha-D-glucopyranoside ligase from Renibacterium salmoninarum (strain ATCC 33209 / DSM 20767 / JCM 11484 / NBRC 15589 / NCIMB 2235).